Here is a 546-residue protein sequence, read N- to C-terminus: G1/S-specific cyclin CLN1 (546 aa).

Residues 224–265 (SNGKEWSCKRKSQSSDDSDATVEEHISSSPQSTGLDGDTTTM) form a disordered region.

Belongs to the cyclin family.

Essential for the control of the cell cycle at the G1/S (start) transition. Interacts with the CDC28 protein kinase to form MPF. The chain is G1/S-specific cyclin CLN1 (CLN1) from Saccharomyces cerevisiae (strain ATCC 204508 / S288c) (Baker's yeast).